The sequence spans 420 residues: Transcription termination factor Rho (420 aa).

The region spanning 49–124 (DIFGGGVLEI…LKVDQVNDDK (76 aa)) is the Rho RNA-BD domain. Residues 170–175 (GKGQRG), 182–187 (KAGKTM), and arginine 213 contribute to the ATP site.

This sequence belongs to the Rho family. As to quaternary structure, homohexamer. The homohexamer assembles into an open ring structure.

Functionally, facilitates transcription termination by a mechanism that involves Rho binding to the nascent RNA, activation of Rho's RNA-dependent ATPase activity, and release of the mRNA from the DNA template. This chain is Transcription termination factor Rho, found in Haemophilus influenzae (strain ATCC 51907 / DSM 11121 / KW20 / Rd).